A 191-amino-acid chain; its full sequence is MSGGGTETPTGCEAPSGGGGGGGRKRDSLGTTSSPAHLIIKDLGEIHSRLLDHRPVIQGETRYFVKEFEEKRGLREMRALENLKNMIHETNEHTLPTCTETMEDSLSHVLQRLQAATASVCRLQQREQERKKVHNDHLIASEKQHIMQWEDFMKEQHSKQADVDEEHRKAMEKLKEQYAEMEKDLAKFSTF.

The interval 1–32 (MSGGGTETPTGCEAPSGGGGGGGRKRDSLGTT) is disordered. Ser-2 carries the post-translational modification N-acetylserine. Positions 160-191 (QADVDEEHRKAMEKLKEQYAEMEKDLAKFSTF) form a coiled coil.

The protein belongs to the BLOC1S5 family. Component of the biogenesis of lysosome-related organelles complex 1 (BLOC-1) composed of BLOC1S1, BLOC1S2, BLOC1S3, BLOC1S4, BLOC1S5, BLOC1S6, DTNBP1/BLOC1S7 and SNAPIN/BLOC1S8. Octamer composed of one copy each BLOC1S1, BLOC1S2, BLOC1S3, BLOC1S4, BLOC1S5, BLOC1S6, DTNBP1/BLOC1S7 and SNAPIN/BLOC1S8. The BLOC-1 complex associates with the AP-3 protein complex and membrane protein cargos. Interacts with BLOC1S4, BLOC1S6, DTNBP1/BLOC1S7 and PI4K2A.

Component of the BLOC-1 complex, a complex that is required for normal biogenesis of lysosome-related organelles (LRO), such as platelet dense granules and melanosomes. In concert with the AP-3 complex, the BLOC-1 complex is required to target membrane protein cargos into vesicles assembled at cell bodies for delivery into neurites and nerve terminals. The BLOC-1 complex, in association with SNARE proteins, is also proposed to be involved in neurite extension. Plays a role in intracellular vesicle trafficking. The polypeptide is Biogenesis of lysosome-related organelles complex 1 subunit 5 (BLOC1S5) (Sus scrofa (Pig)).